A 407-amino-acid polypeptide reads, in one-letter code: Phosphopentomutase (407 aa).

Residues aspartate 10, aspartate 306, histidine 311, aspartate 347, histidine 348, and histidine 359 each contribute to the Mn(2+) site.

This sequence belongs to the phosphopentomutase family. Mn(2+) serves as cofactor.

It localises to the cytoplasm. It catalyses the reaction 2-deoxy-alpha-D-ribose 1-phosphate = 2-deoxy-D-ribose 5-phosphate. It carries out the reaction alpha-D-ribose 1-phosphate = D-ribose 5-phosphate. Its pathway is carbohydrate degradation; 2-deoxy-D-ribose 1-phosphate degradation; D-glyceraldehyde 3-phosphate and acetaldehyde from 2-deoxy-alpha-D-ribose 1-phosphate: step 1/2. In terms of biological role, isomerase that catalyzes the conversion of deoxy-ribose 1-phosphate (dRib-1-P) and ribose 1-phosphate (Rib-1-P) to deoxy-ribose 5-phosphate (dRib-5-P) and ribose 5-phosphate (Rib-5-P), respectively. The chain is Phosphopentomutase from Escherichia coli O127:H6 (strain E2348/69 / EPEC).